Here is a 460-residue protein sequence, read N- to C-terminus: UDP-N-acetylmuramoylalanine--D-glutamate ligase (460 aa).

Residue 115-121 coordinates ATP; that stretch reads GTDGKTT.

Belongs to the MurCDEF family.

The protein resides in the cytoplasm. It carries out the reaction UDP-N-acetyl-alpha-D-muramoyl-L-alanine + D-glutamate + ATP = UDP-N-acetyl-alpha-D-muramoyl-L-alanyl-D-glutamate + ADP + phosphate + H(+). Its pathway is cell wall biogenesis; peptidoglycan biosynthesis. Cell wall formation. Catalyzes the addition of glutamate to the nucleotide precursor UDP-N-acetylmuramoyl-L-alanine (UMA). This is UDP-N-acetylmuramoylalanine--D-glutamate ligase from Chlorobium luteolum (strain DSM 273 / BCRC 81028 / 2530) (Pelodictyon luteolum).